The sequence spans 60 residues: Hemocyte defensin Cg-Defh1 (60 aa).

Residues 1–17 (LFTLVVLLMVSADMAFA) form the signal peptide. Beta-D-GlcNAc-(1-&gt;4)-Mur2Ac(oyl-L-Ala-gamma-D-Glu-L-Lys-D-Ala-D-Ala)-di-trans,octa-cis-undecaprenyl diphosphate is bound by residues Phe-19, Gly-20, and Cys-21. 4 disulfides stabilise this stretch: Cys-21-Cys-42, Cys-28-Cys-51, Cys-32-Cys-53, and Cys-37-Cys-56. Residues 22–25 (PRDQ) form a binds to membrane interface region. His-31 is a binding site for beta-D-GlcNAc-(1-&gt;4)-Mur2Ac(oyl-L-Ala-gamma-D-Glu-L-Lys-D-Ala-D-Ala)-di-trans,octa-cis-undecaprenyl diphosphate. Residues 43 to 49 (DAVTLWL) form a binds to membrane interface region. Cys-51 is a beta-D-GlcNAc-(1-&gt;4)-Mur2Ac(oyl-L-Ala-gamma-D-Glu-L-Lys-D-Ala-D-Ala)-di-trans,octa-cis-undecaprenyl diphosphate binding site.

The protein belongs to the invertebrate defensin family. In terms of tissue distribution, expressed in hemocytes.

It is found in the secreted. The protein resides in the target cell membrane. In terms of biological role, antibacterial peptide mostly active against Gram-positive bacteria. It acts by selectively inhibiting peptidoglycan biosynthesis through complex formation with the cell wall precursor lipid II (1:1 molar ratio) thus inhibiting cell wall synthesis. It does not disrupt cell membranes. Is noticeably less potent than Cg-Defh2 and Cg-Defm. Shows no or limited activities against Gram-negative bacteria. In Magallana gigas (Pacific oyster), this protein is Hemocyte defensin Cg-Defh1.